The sequence spans 1114 residues: Structural maintenance of chromosomes protein 6 (1114 aa).

Residues Gln-26–Asp-64 are disordered. A Nuclear localization signal motif is present at residues Arg-35 to Arg-39. Gly-109 to Ser-116 lines the ATP pocket. Residues Ala-259–Glu-529 are a coiled coil. The tract at residues Thr-530–Asp-695 is flexible hinge. Positions Asn-696 to Lys-969 form a coiled coil.

It belongs to the SMC family. SMC6 subfamily. As to quaternary structure, component of the Smc5-Smc6 complex which consists of KRE29, MMS21, NSE1, NSE3, NSE4, NSE5, SMC5 and SMC6.

It is found in the nucleus. The protein localises to the chromosome. Functionally, acts in a DNA repair pathway for removal of UV-induced DNA damage that is distinct from classical nucleotide excision repair and in repair of ionizing radiation damage. Functions in homologous recombination repair of DNA double strand breaks and in recovery of stalled replication forks. Probably plays a role in structure. This is Structural maintenance of chromosomes protein 6 (SMC6) from Saccharomyces cerevisiae (strain ATCC 204508 / S288c) (Baker's yeast).